Here is a 300-residue protein sequence, read N- to C-terminus: Ribosomal protein L11 methyltransferase (300 aa).

Positions 152, 173, 195, and 234 each coordinate S-adenosyl-L-methionine.

It belongs to the methyltransferase superfamily. PrmA family.

The protein resides in the cytoplasm. The catalysed reaction is L-lysyl-[protein] + 3 S-adenosyl-L-methionine = N(6),N(6),N(6)-trimethyl-L-lysyl-[protein] + 3 S-adenosyl-L-homocysteine + 3 H(+). Methylates ribosomal protein L11. In Burkholderia orbicola (strain MC0-3), this protein is Ribosomal protein L11 methyltransferase.